The sequence spans 444 residues: MTAPPPVLTRIDLRGAELTAAELRAALPRGGADVEAVLPTVRPIVAAVAERGAEAALDFGASFDGVRPHAIRVPDAALDAALAGLDCDVCEALQVMVERTRAVHSGQRRTDVTTTLGPGATVTERWVPVERVGLYVPGGNAVYPSSVVMNVVPAQAAGVDSLVVASPPQAQWDGMPHPTILAAARLLGVDEVWAVGGAQAVALLAYGGTDTDGAALTPVDMITGPGNIYVTAAKRLCRSRVGIDAEAGPTEIAILADHTADPVHVAADLISQAEHDELAASVLVTPSEDLADATDAELAGQLQTTVHRERVTAALTGRQSAIVLVDDVDAAVLVVNAYAAEHLEIQTADAPQVASRIRSAGAIFVGPWSPVSLGDYCAGSNHVLPTAGCARHSSGLSVQTFLRGIHVVEYTEAALKDVSGHVITLATAEDLPAHGEAVRRRFER.

3 residues coordinate NAD(+): tyrosine 135, glutamine 199, and asparagine 227. Residues threonine 250, glutamine 272, and histidine 275 each coordinate substrate. Residues glutamine 272 and histidine 275 each contribute to the Zn(2+) site. Catalysis depends on proton acceptor residues glutamate 341 and histidine 342. 4 residues coordinate substrate: histidine 342, aspartate 375, glutamate 429, and histidine 434. Aspartate 375 is a Zn(2+) binding site. Histidine 434 contributes to the Zn(2+) binding site.

This sequence belongs to the histidinol dehydrogenase family. Zn(2+) serves as cofactor.

It carries out the reaction L-histidinol + 2 NAD(+) + H2O = L-histidine + 2 NADH + 3 H(+). It participates in amino-acid biosynthesis; L-histidine biosynthesis; L-histidine from 5-phospho-alpha-D-ribose 1-diphosphate: step 9/9. In terms of biological role, catalyzes the sequential NAD-dependent oxidations of L-histidinol to L-histidinaldehyde and then to L-histidine. The polypeptide is Histidinol dehydrogenase (hisD) (Mycobacterium bovis (strain ATCC BAA-935 / AF2122/97)).